We begin with the raw amino-acid sequence, 730 residues long: Ribosomal RNA large subunit methyltransferase K/L (730 aa).

The 112-residue stretch at 46-157 folds into the THUMP domain; sequence TAYRLCLWSR…RGEAILSLDL (112 aa).

This sequence belongs to the methyltransferase superfamily. RlmKL family.

The protein resides in the cytoplasm. It catalyses the reaction guanosine(2445) in 23S rRNA + S-adenosyl-L-methionine = N(2)-methylguanosine(2445) in 23S rRNA + S-adenosyl-L-homocysteine + H(+). It carries out the reaction guanosine(2069) in 23S rRNA + S-adenosyl-L-methionine = N(2)-methylguanosine(2069) in 23S rRNA + S-adenosyl-L-homocysteine + H(+). Its function is as follows. Specifically methylates the guanine in position 2445 (m2G2445) and the guanine in position 2069 (m7G2069) of 23S rRNA. The protein is Ribosomal RNA large subunit methyltransferase K/L of Pseudomonas putida (strain W619).